The chain runs to 84 residues: Fulditoxin (84 aa).

A signal peptide spans 1–21; sequence MKTLLLTLVVVTIVCLDLGNS. 4 cysteine pairs are disulfide-bonded: Cys-24-Cys-41, Cys-34-Cys-59, Cys-63-Cys-71, and Cys-72-Cys-77. His-50 serves as a coordination point for Zn(2+).

The protein belongs to the three-finger toxin family. Short-chain subfamily. In terms of assembly, homodimer; non-covalently linked. Is able to form a tetramer of dimers in the presence of 2 zinc ions. As to expression, expressed by the venom gland.

The protein resides in the secreted. In terms of biological role, postsynaptic neurotoxin that produces potent, and completely reversible, postsynaptic neuromuscular blockade, as well as broad spectrum inhibition of human muscle and neuronal nicotinic acetylcholine receptors (nAChRs). Inhibition is potent or moderate, depending on the receptor (alpha-1-beta-1-delta-epsilon/CHRNA1-CHRNB1-CHRND-CHRNE (IC(50)=2.56 uM), alpha-4-beta-2/CHRNA4-CHRNB2 (IC(50)=1.8 uM), alpha-7/CHRNA7 (IC(50)=7 uM), and alpha-3-beta-2/CHRNA3-CHRNB2 (IC(50)=12.6 uM)). Acts as a competitive antagonist of ACh. Binds to chicken muscle-type nicotinic acetylcholine receptor (AChR) with high potency compared with the cloned human receptor. Unlike short-chain alpha-3FTxs that only bind to muscle nAChRs, this toxin utilizes dimerization to expand its pharmacological targets to block neuronal nAChRs. In Micrurus fulvius (Eastern coral snake), this protein is Fulditoxin.